Here is a 370-residue protein sequence, read N- to C-terminus: Quinolinate synthase (370 aa).

Iminosuccinate is bound by residues histidine 62 and serine 83. Residue cysteine 128 coordinates [4Fe-4S] cluster. Residues 154–156 (YAN) and serine 171 each bind iminosuccinate. Cysteine 215 contributes to the [4Fe-4S] cluster binding site. Iminosuccinate is bound by residues 241 to 243 (HPE) and threonine 258. Residue cysteine 312 participates in [4Fe-4S] cluster binding.

The protein belongs to the quinolinate synthase family. Type 1 subfamily. [4Fe-4S] cluster serves as cofactor.

The protein resides in the cytoplasm. The catalysed reaction is iminosuccinate + dihydroxyacetone phosphate = quinolinate + phosphate + 2 H2O + H(+). It participates in cofactor biosynthesis; NAD(+) biosynthesis; quinolinate from iminoaspartate: step 1/1. Catalyzes the condensation of iminoaspartate with dihydroxyacetone phosphate to form quinolinate. The protein is Quinolinate synthase of Neisseria gonorrhoeae (strain ATCC 700825 / FA 1090).